Here is a 431-residue protein sequence, read N- to C-terminus: Histidinol dehydrogenase (431 aa).

3 residues coordinate NAD(+): Tyr-130, Gln-192, and Asn-215. Positions 238, 260, and 263 each coordinate substrate. 2 residues coordinate Zn(2+): Gln-260 and His-263. Active-site proton acceptor residues include Glu-328 and His-329. 4 residues coordinate substrate: His-329, Asp-362, Glu-416, and His-421. Asp-362 contributes to the Zn(2+) binding site. A Zn(2+)-binding site is contributed by His-421.

It belongs to the histidinol dehydrogenase family. Zn(2+) serves as cofactor.

It catalyses the reaction L-histidinol + 2 NAD(+) + H2O = L-histidine + 2 NADH + 3 H(+). The protein operates within amino-acid biosynthesis; L-histidine biosynthesis; L-histidine from 5-phospho-alpha-D-ribose 1-diphosphate: step 9/9. Functionally, catalyzes the sequential NAD-dependent oxidations of L-histidinol to L-histidinaldehyde and then to L-histidine. This Thermosynechococcus vestitus (strain NIES-2133 / IAM M-273 / BP-1) protein is Histidinol dehydrogenase.